A 195-amino-acid polypeptide reads, in one-letter code: Holliday junction branch migration complex subunit RuvA (195 aa).

The tract at residues 1–61 (MYEYFEGIIS…DTGITLYGFQ (61 aa)) is domain I. Residues 62-140 (DQDDKGLFLK…DYVARLDKPE (79 aa)) form a domain II region. Positions 141–146 (NGEEIS) are flexible linker. Positions 146–195 (SPALNDALLALIALGYTQKEVDRITPKLVEIEADTADQYIKKGLALLLKK) are domain III.

The protein belongs to the RuvA family. Homotetramer. Forms an RuvA(8)-RuvB(12)-Holliday junction (HJ) complex. HJ DNA is sandwiched between 2 RuvA tetramers; dsDNA enters through RuvA and exits via RuvB. An RuvB hexamer assembles on each DNA strand where it exits the tetramer. Each RuvB hexamer is contacted by two RuvA subunits (via domain III) on 2 adjacent RuvB subunits; this complex drives branch migration. In the full resolvosome a probable DNA-RuvA(4)-RuvB(12)-RuvC(2) complex forms which resolves the HJ.

The protein localises to the cytoplasm. The RuvA-RuvB-RuvC complex processes Holliday junction (HJ) DNA during genetic recombination and DNA repair, while the RuvA-RuvB complex plays an important role in the rescue of blocked DNA replication forks via replication fork reversal (RFR). RuvA specifically binds to HJ cruciform DNA, conferring on it an open structure. The RuvB hexamer acts as an ATP-dependent pump, pulling dsDNA into and through the RuvAB complex. HJ branch migration allows RuvC to scan DNA until it finds its consensus sequence, where it cleaves and resolves the cruciform DNA. In Lactobacillus acidophilus (strain ATCC 700396 / NCK56 / N2 / NCFM), this protein is Holliday junction branch migration complex subunit RuvA.